A 217-amino-acid polypeptide reads, in one-letter code: Pyrophosphatase PpaX (217 aa).

Catalysis depends on D11, which acts as the Nucleophile.

It belongs to the HAD-like hydrolase superfamily. PpaX family. The cofactor is Mg(2+).

It catalyses the reaction diphosphate + H2O = 2 phosphate + H(+). Its function is as follows. Hydrolyzes pyrophosphate formed during P-Ser-HPr dephosphorylation by HPrK/P. Might play a role in controlling the intracellular pyrophosphate pool. In Listeria innocua serovar 6a (strain ATCC BAA-680 / CLIP 11262), this protein is Pyrophosphatase PpaX.